Here is a 527-residue protein sequence, read N- to C-terminus: Transcription initiation factor TFIID subunit 6b (527 aa).

Residues 3 to 99 form the Histone-fold domain; sequence TKESIEVIAQ…NLEPTSGSKS (97 aa). 2 disordered regions span residues 410 to 442 and 462 to 492; these read SPPTSSVWKTNGKLTSPRQSKRKASSDNLTHQP and MRGTTTVPQQSHTDADARHHNSPSTIAPKTS. 2 stretches are compositionally biased toward polar residues: residues 416–427 and 462–473; these read VWKTNGKLTSPR and MRGTTTVPQQSH.

It belongs to the TAF6 family. As to quaternary structure, component of the TFIID complex. TFIID is composed of TATA binding protein (TBP) and a number of TBP-associated factors (TAFs) whose MWs range from 14-217 kDa. Interacts with TAF5 and TAF9. In terms of tissue distribution, expressed in roots, leaves, inflorescences and siliques.

It is found in the nucleus. TAFs are components of the transcription factor IID (TFIID) complex that is essential for mediating regulation of RNA polymerase transcription. Not redundant with TAF6. This Arabidopsis thaliana (Mouse-ear cress) protein is Transcription initiation factor TFIID subunit 6b (TAF6B).